The chain runs to 233 residues: UPF0758 protein SRU_2338 (233 aa).

One can recognise an MPN domain in the interval 110–232 (QVTCPADVAD…HTSLAERGVI (123 aa)). Zn(2+) contacts are provided by H181, H183, and D194. The JAMM motif motif lies at 181–194 (HNHPSGNPEPSRED).

Belongs to the UPF0758 family.

The chain is UPF0758 protein SRU_2338 from Salinibacter ruber (strain DSM 13855 / M31).